A 136-amino-acid chain; its full sequence is Glutaredoxin-C8 (136 aa).

Residues 33–135 (SSFVKSTVKA…KLLNIDVKED (103 aa)) form the Glutaredoxin domain. A disulfide bridge links C53 with C56.

Belongs to the glutaredoxin family. CPYC subfamily.

It is found in the cytoplasm. Its function is as follows. Has a glutathione-disulfide oxidoreductase activity in the presence of NADPH and glutathione reductase. Reduces low molecular weight disulfides and proteins. This chain is Glutaredoxin-C8 (GRXC8), found in Oryza sativa subsp. japonica (Rice).